Consider the following 251-residue polypeptide: NADPH-dependent oxidoreductase (251 aa).

This sequence belongs to the flavin oxidoreductase frp family. The cofactor is FMN.

Reduces FMN, organic nitro compounds and disulfide DTNB. Involved in maintenance of the cellular redox state and the disulfide stress response. In Staphylococcus aureus (strain Mu50 / ATCC 700699), this protein is NADPH-dependent oxidoreductase (nfrA).